Here is a 231-residue protein sequence, read N- to C-terminus: Translin-associated protein X homolog (231 aa).

It belongs to the translin family.

Its subcellular location is the cytoplasm. It is found in the nucleus. The polypeptide is Translin-associated protein X homolog (Schizosaccharomyces pombe (strain 972 / ATCC 24843) (Fission yeast)).